The chain runs to 149 residues: Calmodulin-1 (149 aa).

N-acetylalanine is present on Ala2. EF-hand domains are found at residues 8–43 (DQISEFKEAFSLFDKDGDGCITTKELGTVMRSLGQN), 44–79 (PTEAELQDMINEVDADGNGTIDFPEFLNLMARKMKD), 81–116 (DSEEELKEAFRVFDKDQNGFISAAELRHVMTNLGEK), and 117–149 (LTDEEVDEMIREADVDGDGQINYEEFVKVMMAK). Ca(2+) contacts are provided by Asp21, Asp23, Asp25, Cys27, Glu32, Asp57, Asp59, Asn61, Thr63, Glu68, Asp94, Asp96, Asn98, and Glu105. Lys116 bears the N6,N6,N6-trimethyllysine mark. Positions 130, 132, 134, 136, and 141 each coordinate Ca(2+).

The protein belongs to the calmodulin family.

Functionally, calmodulin mediates the control of a large number of enzymes, ion channels and other proteins by Ca(2+). Among the enzymes to be stimulated by the calmodulin-Ca(2+) complex are a number of protein kinases and phosphatases. This chain is Calmodulin-1 (CAM81), found in Petunia hybrida (Petunia).